Consider the following 279-residue polypeptide: Nitrate import permease protein NrtB (279 aa).

Positions 86 to 270 (IAASLQRVAV…LLNALVGFIA (185 aa)) constitute an ABC transmembrane type-1 domain. 6 consecutive transmembrane segments (helical) span residues 98-118 (LMAA…VLMF), 124-144 (IFQV…LAAF), 151-171 (AIFV…AVGV), 196-216 (VLLP…IGLS), 217-237 (WLAI…FFIW), and 249-269 (ILAI…VGFI).

This sequence belongs to the binding-protein-dependent transport system permease family. CysTW subfamily. As to quaternary structure, the complex is composed of two ATP-binding proteins (NrtC and NrtD), two transmembrane proteins (NrtB) and a solute-binding protein (NrtA).

The protein localises to the cell inner membrane. In terms of biological role, part of the ABC transporter complex NrtABCD involved in nitrate uptake. The complex is probably also involved in nitrite transport. Probably responsible for the translocation of the substrate across the membrane. The polypeptide is Nitrate import permease protein NrtB (Leptolyngbya laminosa (Phormidium laminosum)).